Here is a 739-residue protein sequence, read N- to C-terminus: NAD(P)H-quinone oxidoreductase subunit 5, chloroplastic (739 aa).

The next 16 membrane-spanning stretches (helical) occupy residues 9-29 (WIIP…LILF), 40-60 (WAFQ…YLSI), 89-109 (IDPL…MVLI), 125-145 (FAYM…SNLI), 147-167 (IYIF…FWFT), 185-205 (GDFG…SFEF), 219-239 (NEVN…GAVA), 258-278 (TPIS…FLVA), 286-306 (VIPY…LLGA), 327-347 (LGYM…FHLI), 354-374 (ALLF…VGYS), 396-416 (ITFL…CFWS), 425-445 (WLYS…TAFY), 543-563 (LFPI…GIPF), 602-622 (VVSV…YKPI), and 717-737 (SYLF…YLLF).

Belongs to the complex I subunit 5 family. In terms of assembly, NDH is composed of at least 16 different subunits, 5 of which are encoded in the nucleus.

Its subcellular location is the plastid. It localises to the chloroplast thylakoid membrane. The catalysed reaction is a plastoquinone + NADH + (n+1) H(+)(in) = a plastoquinol + NAD(+) + n H(+)(out). It catalyses the reaction a plastoquinone + NADPH + (n+1) H(+)(in) = a plastoquinol + NADP(+) + n H(+)(out). Functionally, NDH shuttles electrons from NAD(P)H:plastoquinone, via FMN and iron-sulfur (Fe-S) centers, to quinones in the photosynthetic chain and possibly in a chloroplast respiratory chain. The immediate electron acceptor for the enzyme in this species is believed to be plastoquinone. Couples the redox reaction to proton translocation, and thus conserves the redox energy in a proton gradient. This chain is NAD(P)H-quinone oxidoreductase subunit 5, chloroplastic (ndhF), found in Solanum tuberosum (Potato).